The chain runs to 310 residues: 4-hydroxyproline 2-epimerase (310 aa).

The Proton acceptor role is filled by C88. Residues 89-90, H208, and D232 each bind substrate; that span reads GH. The Proton donor role is filled by C236. 237-238 lines the substrate pocket; that stretch reads GT.

This sequence belongs to the proline racemase family.

It catalyses the reaction trans-4-hydroxy-L-proline = cis-4-hydroxy-D-proline. Its function is as follows. Catalyzes the epimerization of trans-4-hydroxy-L-proline (t4LHyp) to cis-4-hydroxy-D-proline (c4DHyp). Is likely involved in a degradation pathway that converts t4LHyp to alpha-ketoglutarate. Can also catalyze the dehydration of trans-3-hydroxy-L-proline (t3LHyp) to Delta(1)-pyrroline-2-carboxylate (Pyr2C), albeit with 42-fold lower efficiency. Displays no proline racemase activity. The chain is 4-hydroxyproline 2-epimerase from Burkholderia thailandensis (strain ATCC 700388 / DSM 13276 / CCUG 48851 / CIP 106301 / E264).